The primary structure comprises 171 residues: Interleukin-26 (171 aa).

The N-terminal stretch at Met-1 to Ala-21 is a signal peptide.

Belongs to the IL-10 family. As to quaternary structure, homodimer. Expressed in HVS transformed T-cells but not other T-cell lines or primary stimulated T-cells. Expressed in colonic T-cells including Th17 inflammatory T-cells; the expression is significantly increased in serum of patients with Crohn's disease (at protein level).

Its subcellular location is the secreted. Functionally, may play a role in local mechanisms of mucosal immunity and seems to have a pro-inflammatory function. May play a role in inflammatory bowel disease. Activates STAT1 and STAT3, MAPK1/3 (ERK1/2), JUN and AKT. Induces expression of SOCS3, TNF-alpha and IL-8, secretion of IL-8 and IL-10 and surface expression of ICAM1. Decreases proliferation of intestinal epithelial cells. Is inhibited by heparin. The sequence is that of Interleukin-26 (IL26) from Homo sapiens (Human).